Here is a 366-residue protein sequence, read N- to C-terminus: Alanine racemase (366 aa).

The active-site Proton acceptor; specific for D-alanine is K40. The residue at position 40 (K40) is an N6-(pyridoxal phosphate)lysine. R136 is a binding site for substrate. The active-site Proton acceptor; specific for L-alanine is Y263. Residue M310 coordinates substrate.

Belongs to the alanine racemase family. Pyridoxal 5'-phosphate serves as cofactor.

It carries out the reaction L-alanine = D-alanine. It participates in amino-acid biosynthesis; D-alanine biosynthesis; D-alanine from L-alanine: step 1/1. Functionally, catalyzes the interconversion of L-alanine and D-alanine. May also act on other amino acids. The chain is Alanine racemase (alr) from Streptococcus pyogenes serotype M6 (strain ATCC BAA-946 / MGAS10394).